Consider the following 159-residue polypeptide: Bacterioferritin (159 aa).

One can recognise a Ferritin-like diiron domain in the interval 1-145 (MQGDPDVLRL…TQLALMGQLG (145 aa)). Fe cation contacts are provided by E18 and E51. Heme b is bound at residue M52. H54, E94, E127, and H130 together coordinate Fe cation.

It belongs to the bacterioferritin family. As to quaternary structure, homooligomer of 24 subunits, arranged as 12 dimers, that are packed together to form an approximately spherical molecule with a central cavity, in which large amounts of iron can be deposited. It depends on heme b as a cofactor.

The protein resides in the cytoplasm. It is found in the cytosol. It localises to the membrane. The catalysed reaction is 4 Fe(2+) + O2 + 4 H(+) = 4 Fe(3+) + 2 H2O. It carries out the reaction Fe(2+)(in) = Fe(2+)(out). Its function is as follows. Iron-storage protein, whose ferroxidase center binds Fe(2+), oxidizes it using dioxygen to Fe(3+), and participates in the subsequent Fe(3+) oxide mineral core formation within the central cavity of the BFR protein shell. Probably plays a crucial role in the intracellular existence of this organism by functioning as a temporary depository for iron in iron deprivation. The protein is Bacterioferritin (bfr) of Mycobacterium leprae (strain TN).